The chain runs to 268 residues: Leucyl/phenylalanyl-tRNA--protein transferase (268 aa).

The protein belongs to the L/F-transferase family.

The protein resides in the cytoplasm. The enzyme catalyses N-terminal L-lysyl-[protein] + L-leucyl-tRNA(Leu) = N-terminal L-leucyl-L-lysyl-[protein] + tRNA(Leu) + H(+). The catalysed reaction is N-terminal L-arginyl-[protein] + L-leucyl-tRNA(Leu) = N-terminal L-leucyl-L-arginyl-[protein] + tRNA(Leu) + H(+). It catalyses the reaction L-phenylalanyl-tRNA(Phe) + an N-terminal L-alpha-aminoacyl-[protein] = an N-terminal L-phenylalanyl-L-alpha-aminoacyl-[protein] + tRNA(Phe). Its function is as follows. Functions in the N-end rule pathway of protein degradation where it conjugates Leu, Phe and, less efficiently, Met from aminoacyl-tRNAs to the N-termini of proteins containing an N-terminal arginine or lysine. The protein is Leucyl/phenylalanyl-tRNA--protein transferase of Zymomonas mobilis subsp. mobilis (strain ATCC 31821 / ZM4 / CP4).